A 714-amino-acid chain; its full sequence is MEMASAFTLNVRLDNIAIITIDVPGEKMNTLKAEFASQVRAIIKQIRENKELRGVVFVSAKPDNFIAGADINMIGNCKTAQEAEVLARQGQQLMAEIHALPIPVIAAIHGACLGGGLELALACHGRVCTDDPKTVLGLPEVQLGLLPGSGGTQRLPRLIGVSTALEMILTGKQLRAKQAVKLGLVDDVVPHSILLEAAVELAKQDRPSSRPLPVRERILAGPLGRALLFKMVGKKTEHKTQGNYPATERILEVVETGLAQGTSSGYDAEARAFGELAMTPQSQALRNIFFASTDVKKDPGSDAPPAPLNSVGILGGGLMGGGIAYVTACKAGLPVRIKDINPRGINHALKYSWDQLEGKVRRRHLKASERDKQLALISGTTDYCGFAHRDLIIEAVFENLELKQQMVAEVEQNCATHTIFASNTSSLPIGDIAAHAARPEQVIGLHFFSPVEKMPLVEIIPHASTSAQTIATTVKLAKKQGKTPIVVRDKAGFYVNRILAPYINEAIRMLTEGERIEHIDAALVKFGFPVGPIQLLDEVGIDTGTKIMPVLEAAYGERFSAPANVVSSILNDDRKGRKNGRGFYLYGQKGCKSKKQVDPAIYPLIGAQGQGRLSAPQVAERCVMLMLNEAVRCLDEQVIRSVRDGDIGAVFGIGFPPFLGGPFRYIDSLGAGEVVAIMQRLATQYGSRFTPCDRLVEMSERGESFWKTTATDLQ.

Residues 1–190 (MEMASAFTLN…KLGLVDDVVP (190 aa)) are enoyl-CoA hydratase. The segment at 306–714 (APLNSVGILG…FWKTTATDLQ (409 aa)) is 3-hydroxyacyl-CoA dehydrogenase.

It in the N-terminal section; belongs to the enoyl-CoA hydratase/isomerase family. In the central section; belongs to the 3-hydroxyacyl-CoA dehydrogenase family. Heterotetramer of two alpha chains (FadJ) and two beta chains (FadI).

The protein resides in the cytoplasm. The enzyme catalyses a (3S)-3-hydroxyacyl-CoA = a (2E)-enoyl-CoA + H2O. It catalyses the reaction a 4-saturated-(3S)-3-hydroxyacyl-CoA = a (3E)-enoyl-CoA + H2O. It carries out the reaction a (3S)-3-hydroxyacyl-CoA + NAD(+) = a 3-oxoacyl-CoA + NADH + H(+). The catalysed reaction is (3S)-3-hydroxybutanoyl-CoA = (3R)-3-hydroxybutanoyl-CoA. The protein operates within lipid metabolism; fatty acid beta-oxidation. In terms of biological role, catalyzes the formation of a hydroxyacyl-CoA by addition of water on enoyl-CoA. Also exhibits 3-hydroxyacyl-CoA epimerase and 3-hydroxyacyl-CoA dehydrogenase activities. This chain is Fatty acid oxidation complex subunit alpha, found in Escherichia coli O45:K1 (strain S88 / ExPEC).